The sequence spans 392 residues: Succinate--CoA ligase [ADP-forming] subunit beta (392 aa).

Positions 9-248 (KDILRKFGVA…ISEEDPFEVE (240 aa)) constitute an ATP-grasp domain. ATP is bound by residues Lys50, 57-59 (GRG), Glu103, Met106, and Glu111. Mg(2+) contacts are provided by Asn203 and Asp217. Substrate is bound by residues Asn268 and 325-327 (GIV).

Belongs to the succinate/malate CoA ligase beta subunit family. Heterotetramer of two alpha and two beta subunits. Mg(2+) serves as cofactor.

The catalysed reaction is succinate + ATP + CoA = succinyl-CoA + ADP + phosphate. It catalyses the reaction GTP + succinate + CoA = succinyl-CoA + GDP + phosphate. It participates in carbohydrate metabolism; tricarboxylic acid cycle; succinate from succinyl-CoA (ligase route): step 1/1. Functionally, succinyl-CoA synthetase functions in the citric acid cycle (TCA), coupling the hydrolysis of succinyl-CoA to the synthesis of either ATP or GTP and thus represents the only step of substrate-level phosphorylation in the TCA. The beta subunit provides nucleotide specificity of the enzyme and binds the substrate succinate, while the binding sites for coenzyme A and phosphate are found in the alpha subunit. This Chlorobium phaeobacteroides (strain DSM 266 / SMG 266 / 2430) protein is Succinate--CoA ligase [ADP-forming] subunit beta.